Consider the following 98-residue polypeptide: Prolactin-releasing peptide (98 aa).

The signal sequence occupies residues 1-22; it reads MKAVGAWLLCLLLLGLALQGAA. Phe-53 carries the post-translational modification Phenylalanine amide. Residues 58–98 constitute a propeptide that is removed on maturation; the sequence is AAPGDGPRPGPRRELACIPLEGGAEPSRALLGRLTAQLVQE.

In terms of tissue distribution, more abundantly expressed in the brainstem than the hypothalamus.

It localises to the secreted. In terms of biological role, stimulates prolactin (PRL) release and regulates the expression of prolactin through its receptor GPR10. May stimulate lactotrophs directly to secrete PRL. The sequence is that of Prolactin-releasing peptide (PRLH) from Ovis aries (Sheep).